The following is a 156-amino-acid chain: Ribosomal RNA large subunit methyltransferase H (156 aa).

S-adenosyl-L-methionine is bound by residues leucine 73, glycine 104, and 123 to 128; that span reads LSRLTL.

Belongs to the RNA methyltransferase RlmH family. Homodimer.

Its subcellular location is the cytoplasm. It catalyses the reaction pseudouridine(1915) in 23S rRNA + S-adenosyl-L-methionine = N(3)-methylpseudouridine(1915) in 23S rRNA + S-adenosyl-L-homocysteine + H(+). Specifically methylates the pseudouridine at position 1915 (m3Psi1915) in 23S rRNA. This Thiobacillus denitrificans (strain ATCC 25259 / T1) protein is Ribosomal RNA large subunit methyltransferase H.